The sequence spans 595 residues: Glycine betaine transporter BetP (595 aa).

Over 1-59 (MTTSDPNPKPIVEDAQPEQITATEELAGLLENPTNLEGKLADAEEEIILEGEDTQASLN) the chain is Cytoplasmic. Residues 60–80 (WSVIVPALVIVLATVVWGIGF) form a helical membrane-spanning segment. The Periplasmic segment spans residues 81 to 98 (KDSFTNFASSALSAVVDN). The chain crosses the membrane as a helical span at residues 99-119 (LGWAFILFGTVFVFFIVVIAA). Residues 120–137 (SKFGTIRLGRIDEAPEFR) lie on the Cytoplasmic side of the membrane. The helical transmembrane segment at 138-158 (TVSWISMMFAAGMGIGLMFYG) threads the bilayer. Na(+) contacts are provided by Ala147, Ala148, and Met150. 152–153 (IG) is a binding site for glycine betaine. At 159–185 (TTEPLTFYRNGVPGHDEHNVGVAMSTT) the chain is on the periplasmic side. The helical transmembrane segment at 186-206 (MFHWTLHPWAIYAIVGLAIAY) threads the bilayer. Residues 207–236 (STFRVGRKQLLSSAFVPLIGEKGAEGWLGK) lie on the Cytoplasmic side of the membrane. A helical transmembrane segment spans residues 237–257 (LIDILAIIATVFGTACSLGLG). Ser253 provides a ligand contact to glycine betaine. Over 258–276 (ALQIGAGLSAANIIEDPSD) the chain is Periplasmic. The helical transmembrane segment at 277–296 (WTIVGIVSVLTLAFIFSAIS) threads the bilayer. Over 297–299 (GVG) the chain is Cytoplasmic. A helical transmembrane segment spans residues 300–323 (KGIQYLSNANMVLAALLAIFVFVV). Ser306 and Met310 together coordinate Na(+). Residues 324 to 365 (GPTVSILNLLPGSIGNYLSNFFQMAGRTAMSADGTAGEWLGS) lie on the Periplasmic side of the membrane. The helical transmembrane segment at 366 to 386 (WTIFYWAWWISWSPFVGMFLA) threads the bilayer. 373-377 (WWISW) lines the glycine betaine pocket. Topologically, residues 387–396 (RISRGRSIRE) are cytoplasmic. A helical membrane pass occupies residues 397-417 (FILGVLLVPAGVSTVWFSIFG). At 418 to 451 (GTAIVFEQNGESIWGDGAAEEQLFGLLHALPGGQ) the chain is on the periplasmic side. Residues 452-476 (IMGIIAMILLGTFFITSADSASTVM) form a helical membrane-spanning segment. Residues 477 to 489 (GTMSQHGQLEANK) are Cytoplasmic-facing. Residues 490 to 510 (WVTAAWGVATAAIGLTLLLSG) traverse the membrane as a helical segment. Residues 511–520 (GDNALSNLQN) are Periplasmic-facing. The helical transmembrane segment at 521–541 (VTIVAATPFLFVVIGLMFALV) threads the bilayer. At 542 to 595 (KDLSNDVIYLEYREQQRFNARLARERRVHNEHRKRELAAKRRRERKASGAGKRR) the chain is on the cytoplasmic side. A disordered region spans residues 570 to 595 (HNEHRKRELAAKRRRERKASGAGKRR). Positions 581-595 (KRRRERKASGAGKRR) are enriched in basic residues.

Belongs to the BCCT transporter (TC 2.A.15) family. Homotrimer. The monomer can accumulate glycine betaine, but trimerization is required to properly respond to osmotic stress.

It localises to the cell inner membrane. With respect to regulation, uptake is activated by hyperosmotic stress. Osmoresponsive activation is triggered by a change in the internal K(+) concentration. In addition, shows a pronounced chill stimulation, at temperatures around 10 degrees Celsius. Chill activation may be influenced by the membrane lipid composition. Uptake is completely abolished by the uncoupler CCCP, and to a different extent by the ionophores valinomycin and nigericin. Its function is as follows. Involved in response to osmotic stress. High-affinity glycine betaine-specific uptake system, which couples the uptake of glycine betaine to the symport of two Na(+) ions. Transport is driven both by the Na(+) gradient and by the electrical potential. In addition, functions both as an osmosensor and as an osmoregulator that transduces signal to the catalytic part of the carrier protein, which adapts its activity to the extent of osmotic stress. This is Glycine betaine transporter BetP from Corynebacterium glutamicum (strain ATCC 13032 / DSM 20300 / JCM 1318 / BCRC 11384 / CCUG 27702 / LMG 3730 / NBRC 12168 / NCIMB 10025 / NRRL B-2784 / 534).